We begin with the raw amino-acid sequence, 207 residues long: Large ribosomal subunit protein uL4 (207 aa).

Residues 49–78 (HAVKNRSAVRGGGRKPWRQKGTGRARQGSI) form a disordered region. Residues 60-71 (GGRKPWRQKGTG) are compositionally biased toward basic residues.

Belongs to the universal ribosomal protein uL4 family. Part of the 50S ribosomal subunit.

Functionally, one of the primary rRNA binding proteins, this protein initially binds near the 5'-end of the 23S rRNA. It is important during the early stages of 50S assembly. It makes multiple contacts with different domains of the 23S rRNA in the assembled 50S subunit and ribosome. Its function is as follows. Forms part of the polypeptide exit tunnel. The protein is Large ribosomal subunit protein uL4 of Enterococcus faecalis (strain ATCC 700802 / V583).